Consider the following 319-residue polypeptide: MPFPNCSAPSTVVATAVGVLLGLECGLGLLGNAVALWTFLFRVRVWKPYAVYLLNLALADLLLAACLPFLAAFYLSLQAWHLGRVGCWALHFLLDLSRSVGMAFLAAVALDRYLRVVHPRLKVNLLSPQAALGVSGLVWLLMVALTCPGLLISEAAQNSTRCHSFYSRADGSFSIIWQEALSCLQFVLPFGLIVFCNAGIIRALQKRLREPEKQPKLQRAQALVTLVVVLFALCFLPCFLARVLMHIFQNLGSCRALCAVAHTSDVTGSLTYLHSVLNPVVYCFSSPTFRSSYRRVFHTLRGKGQAAEPPDFNPRDSYS.

Topologically, residues 1–16 (MPFPNCSAPSTVVATA) are extracellular. A glycan (N-linked (GlcNAc...) asparagine) is linked at Asn5. A helical membrane pass occupies residues 17–37 (VGVLLGLECGLGLLGNAVALW). The Cytoplasmic segment spans residues 38–52 (TFLFRVRVWKPYAVY). Residues 53–73 (LLNLALADLLLAACLPFLAAF) form a helical membrane-spanning segment. Residues 74-91 (YLSLQAWHLGRVGCWALH) lie on the Extracellular side of the membrane. A helical transmembrane segment spans residues 92 to 110 (FLLDLSRSVGMAFLAAVAL). At 111–131 (DRYLRVVHPRLKVNLLSPQAA) the chain is on the cytoplasmic side. A helical transmembrane segment spans residues 132 to 152 (LGVSGLVWLLMVALTCPGLLI). Residues 153–180 (SEAAQNSTRCHSFYSRADGSFSIIWQEA) lie on the Extracellular side of the membrane. A helical transmembrane segment spans residues 181-201 (LSCLQFVLPFGLIVFCNAGII). Residues 202–219 (RALQKRLREPEKQPKLQR) are Cytoplasmic-facing. Residues 220-240 (AQALVTLVVVLFALCFLPCFL) traverse the membrane as a helical segment. Residues 241-265 (ARVLMHIFQNLGSCRALCAVAHTSD) are Extracellular-facing. The chain crosses the membrane as a helical span at residues 266-284 (VTGSLTYLHSVLNPVVYCF). The Cytoplasmic portion of the chain corresponds to 285–319 (SSPTFRSSYRRVFHTLRGKGQAAEPPDFNPRDSYS).

This sequence belongs to the G-protein coupled receptor 1 family. As to quaternary structure, interacts with KRAS; in a farnesylation-dependent manner.

Its subcellular location is the cell membrane. Functionally, high-affinity receptor for 12-(S)-hydroxy-5,8,10,14-eicosatetraenoic acid (12-S-HETE), with much lower affinities for other HETE isomers. 12-S-HETE is a eicosanoid, a 12-lipoxygenase (ALOX12) metabolite of arachidonic acid, involved in many physiologic and pathologic processes. 12-S-HETE-binding leads to activation of ERK1/2 (MAPK3/MAPK1), MEK, and NF-kappa-B pathways leading to cell growth. Plays a crucial role for proliferation, survival and macropinocytosis of KRAS-dependent cancer cells by mediating the translocation of KRAS from the endoplasmic reticulum to the plasma membrane (PM) and its association with the PM. Contributes to enhanced immune responses by inducing dendrite protrusion of small intestinal CX3CR1(+) phagocytes for the uptake of luminal antigens. Acts also as a key receptor for 12-(S)-HETE-mediated liver ischemia reperfusion injury. Its function is as follows. Proton-sensing G protein-coupled receptor. In Homo sapiens (Human), this protein is 12-(S)-hydroxy-5,8,10,14-eicosatetraenoic acid receptor (GPR31).